The following is a 157-amino-acid chain: Endoribonuclease YbeY (157 aa).

The Zn(2+) site is built by His112, His116, and His122.

Belongs to the endoribonuclease YbeY family. Requires Zn(2+) as cofactor.

It localises to the cytoplasm. Its function is as follows. Single strand-specific metallo-endoribonuclease involved in late-stage 70S ribosome quality control and in maturation of the 3' terminus of the 16S rRNA. The sequence is that of Endoribonuclease YbeY from Marinobacter nauticus (strain ATCC 700491 / DSM 11845 / VT8) (Marinobacter aquaeolei).